The primary structure comprises 475 residues: Probable phenylalanine--tRNA ligase alpha subunit (475 aa).

Residues 2-151 (TAVAQKIIEN…KRKLVSRRKK (150 aa)) are contains the major tRNA-Phe binding sites. L-phenylalanine is bound by residues T309, 351-353 (QVE), and Y391. Mg(2+) is bound at residue E393. F417 is a binding site for L-phenylalanine.

The protein belongs to the class-II aminoacyl-tRNA synthetase family. Phe-tRNA synthetase alpha subunit type 2 subfamily. Tetramer of two alpha and two beta subunits. It depends on Mg(2+) as a cofactor.

The protein resides in the cytoplasm. It carries out the reaction tRNA(Phe) + L-phenylalanine + ATP = L-phenylalanyl-tRNA(Phe) + AMP + diphosphate + H(+). This is Probable phenylalanine--tRNA ligase alpha subunit from Encephalitozoon cuniculi (strain GB-M1) (Microsporidian parasite).